The primary structure comprises 362 residues: MKPYLLLTPGPLTTSETVKETMMTDWCTWDEDYNLHIVESLRKELVGIATRNTEEYTSVLLQGSGTYCVEAVIGAAIGKNDKLLICSNGAYGDRMGNIAEYYHIDYELLAFDETEQVSVDYVDDYLSNNSDVTHVAFVHCETTTGILNPLKELAHVVKMPGKKLIVDAMSSFGGIPMDVSELGIDFLISSANKCIQGVPGFGFIIARRSELVRCKGVARSLSLDIYDQWETMEKGHGKWRFTSPTHVVRAFKQALTELIEEGGVEARHRRYCENHRVLVEGMRSLGFVTLLDDAIQSPIITSFLYPKTGFDFKAFYTALKSKGFVIYPGKISKADTFRIGNIGDVHPEDFARLVEVVRETEY.

Lysine 193 carries the post-translational modification N6-(pyridoxal phosphate)lysine.

This sequence belongs to the class-V pyridoxal-phosphate-dependent aminotransferase family. PhnW subfamily. Homodimer. The cofactor is pyridoxal 5'-phosphate.

The enzyme catalyses (2-aminoethyl)phosphonate + pyruvate = phosphonoacetaldehyde + L-alanine. In terms of biological role, involved in phosphonate degradation. This Bacteroides fragilis (strain ATCC 25285 / DSM 2151 / CCUG 4856 / JCM 11019 / LMG 10263 / NCTC 9343 / Onslow / VPI 2553 / EN-2) protein is 2-aminoethylphosphonate--pyruvate transaminase.